A 107-amino-acid polypeptide reads, in one-letter code: Protein phosphatase 1 regulatory subunit INH3 (107 aa).

The segment covering 1–14 (MSTATRPSSSATTS) has biased composition (low complexity). Disordered regions lie at residues 1–40 (MSTA…KKKK) and 69–107 (PFDE…KAVD). Positions 71–80 (DEDDSEEEDD) are enriched in acidic residues. Residues 81-94 (NNHHCDHNHEHSES) show a composition bias toward basic and acidic residues. Low complexity predominate over residues 95 to 107 (GEASSSNDSKAVD).

Interacts with protein phosphatase 1. Expressed in roots, cotyledons, leaves, flowers and embryos.

Functionally, inhibitor of protein-phosphatase 1 (PP1). Binds to and inhibits PP1 activity. Required for early embryogenesis progression. The sequence is that of Protein phosphatase 1 regulatory subunit INH3 from Arabidopsis thaliana (Mouse-ear cress).